The chain runs to 479 residues: Serine--tRNA ligase, mitochondrial (479 aa).

The transit peptide at 1–42 (MRLTNRRFSTFLGNALPSKKKGFIFMSQLLYLRTFSTHTSYL) directs the protein to the mitochondrion. 287–289 (TAE) lines the L-serine pocket. 317–319 (RRE) serves as a coordination point for ATP. Glutamate 340 contacts L-serine. 404 to 407 (EITS) contacts ATP. Threonine 438 serves as a coordination point for L-serine.

The protein belongs to the class-II aminoacyl-tRNA synthetase family. Type-1 seryl-tRNA synthetase subfamily. As to quaternary structure, homodimer. The tRNA molecule probably binds across the dimer.

The protein localises to the mitochondrion matrix. It catalyses the reaction tRNA(Ser) + L-serine + ATP = L-seryl-tRNA(Ser) + AMP + diphosphate + H(+). In terms of biological role, catalyzes the attachment of serine to tRNA(Ser). Is also probably able to aminoacylate tRNA(Sec) with serine, to form the misacylated tRNA L-seryl-tRNA(Sec), which will be further converted into selenocysteinyl-tRNA(Sec). This chain is Serine--tRNA ligase, mitochondrial (dia4), found in Schizosaccharomyces pombe (strain 972 / ATCC 24843) (Fission yeast).